Consider the following 1208-residue polypeptide: DNA-directed RNA polymerase subunit beta (1208 aa).

This sequence belongs to the RNA polymerase beta chain family. The RNAP catalytic core consists of 2 alpha, 1 beta, 1 beta' and 1 omega subunit. When a sigma factor is associated with the core the holoenzyme is formed, which can initiate transcription.

It carries out the reaction RNA(n) + a ribonucleoside 5'-triphosphate = RNA(n+1) + diphosphate. Functionally, DNA-dependent RNA polymerase catalyzes the transcription of DNA into RNA using the four ribonucleoside triphosphates as substrates. The chain is DNA-directed RNA polymerase subunit beta from Enterococcus faecium (Streptococcus faecium).